The following is a 1169-amino-acid chain: Polyamine-transporting ATPase 13A2 (1169 aa).

Residues 1–44 are Cytoplasmic-facing; sequence MSADSSLLMGSTPPSYGTLTTGTSIDPLSSSASSVRLSGYCGSP. The stretch at 45–65 is an intramembrane region; it reads WRAIGYHAAVWMLAGIPWLLF. Residues 66–225 are Cytoplasmic-facing; sequence RWKPLWGVRL…ISIPVKSYLQ (160 aa). The helical transmembrane segment at 226–246 threads the bilayer; sequence LLADEALNPYYGFQAFSIALW. The Lumenal portion of the chain corresponds to 247-250; the sequence is LADH. The chain crosses the membrane as a helical span at residues 251–271; that stretch reads YYWYALCIFLISAISICLALY. The Cytoplasmic segment spans residues 272–422; that stretch reads KTRKQSLTLR…SFKFYKHSMK (151 aa). A helical transmembrane segment spans residues 423–443; that stretch reads FVAALSVLALLGTVYSIIILY. At 444-458 the chain is on the lumenal side; the sequence is RNRVPVREIVIRALD. Residues 459–479 form a helical membrane-spanning segment; sequence LVTVVVPPALPAAMTVCTLYA. Residues 480 to 919 are Cytoplasmic-facing; sequence QSRLRTQGIF…REGRCSLDTS (440 aa). The 4-aspartylphosphate intermediate role is filled by Asp508. Mg(2+)-binding residues include Asp867 and Asp871. Residues 920-940 form a helical membrane-spanning segment; the sequence is FSVFKYMALYSLTQFISVLIL. Over 941–946 the chain is Lumenal; that stretch reads YTINTN. The chain crosses the membrane as a helical span at residues 947-967; it reads LGDLQFLAIDLVITTTVAVLM. The Cytoplasmic portion of the chain corresponds to 968-993; the sequence is SRTGPALTLVRARPPGALLSVPVLGS. The helical transmembrane segment at 994-1014 threads the bilayer; sequence LLLQVALVAGIQLGGYFLVIA. The Lumenal portion of the chain corresponds to 1015–1037; that stretch reads QPWFVPLNRTVPAPDNLPNYENT. Asn1022 carries N-linked (GlcNAc...) asparagine glycosylation. A helical transmembrane segment spans residues 1038–1058; that stretch reads VVFSLSGFQYLILAAAVSKGA. Over 1059–1069 the chain is Cytoplasmic; it reads PFRQPLYTNVP. Residues 1070 to 1090 traverse the membrane as a helical segment; sequence FLVALALLGSVLVGLILVPGL. The Lumenal portion of the chain corresponds to 1091-1106; sequence LQGPLGLRNIVDSSFK. The chain crosses the membrane as a helical span at residues 1107 to 1127; it reads LLLLGLVAFNFVGAFMLESVL. The Cytoplasmic segment spans residues 1128–1169; that stretch reads DQCLPACLRWLRPKRASKKQFKRLQQELAEHPWPTLPVGSVR.

Belongs to the cation transport ATPase (P-type) (TC 3.A.3) family. Type V subfamily. In terms of assembly, interacts with MYCBP2; the interaction inhibits the ubiquitination of TSC2 by MYCBP2. Interacts with HDAC6; the interaction results in recruitment of HDAC6 to lysosomes to promote CTTN deacetylation. Post-translationally, autophosphorylated. Accumulates in an inactive autophosphorylated state and autophosphorylation is stimulated by phosphatidic acid and phosphatidylinositol 3,5-bisphosphate but not by Mn(2+) or Zn(2+). The presence of spermine results in a dose-dependent reduction in autophosphorylation.

It is found in the lysosome membrane. The protein resides in the late endosome membrane. The protein localises to the endosome. It localises to the multivesicular body membrane. Its subcellular location is the cytoplasmic vesicle. It is found in the autophagosome membrane. It carries out the reaction spermidine(out) + ATP + H2O = spermidine(in) + ADP + phosphate + H(+). The enzyme catalyses spermine(out) + ATP + H2O = spermine(in) + ADP + phosphate + H(+). Accumulates in an inactive autophosphorylated state. The presence of spermine results in a dose-dependent reduction in autophosphorylation. In terms of biological role, ATPase which acts as a lysosomal polyamine exporter with high affinity for spermine. Also stimulates cellular uptake of polyamines and protects against polyamine toxicity. Plays a role in intracellular cation homeostasis and the maintenance of neuronal integrity. Contributes to cellular zinc homeostasis. Confers cellular protection against Mn(2+) and Zn(2+) toxicity and mitochondrial stress. Required for proper lysosomal and mitochondrial maintenance. Regulates the autophagy-lysosome pathway through the control of SYT11 expression at both transcriptional and post-translational levels. Facilitates recruitment of deacetylase HDAC6 to lysosomes to deacetylate CTTN, leading to actin polymerization, promotion of autophagosome-lysosome fusion and completion of autophagy. Promotes secretion of exosomes as well as secretion of SCNA via exosomes. Plays a role in lipid homeostasis. The protein is Polyamine-transporting ATPase 13A2 of Mus musculus (Mouse).